The primary structure comprises 404 residues: tRNA pseudouridine(31) synthase (404 aa).

Asp168 is an active-site residue.

Belongs to the pseudouridine synthase RluA family.

The protein resides in the cytoplasm. It localises to the mitochondrion. It catalyses the reaction uridine(31) in tRNA = pseudouridine(31) in tRNA. Functionally, catalyzes the formation of pseudouridine at position 31 in the psi GC loop of tRNAS. This chain is tRNA pseudouridine(31) synthase (PUS6), found in Saccharomyces cerevisiae (strain ATCC 204508 / S288c) (Baker's yeast).